The following is a 258-amino-acid chain: Bidirectional sugar transporter SWEET7 (258 aa).

Residues 1 to 11 lie on the Extracellular side of the membrane; sequence MVFAHLNLLRK. A helical transmembrane segment spans residues 12–32; sequence IVGIIGNFIALCLFLSPTPTF. Residues 12 to 100 enclose the MtN3/slv 1 domain; the sequence is IVGIIGNFIA…IFFVYCGRQK (89 aa). Topologically, residues 33–46 are cytoplasmic; that stretch reads VRIVKKKSVEEYSP. A helical membrane pass occupies residues 47–67; sequence IPYLATLINCLVWVLYGLPTV. Residues 68 to 73 are Extracellular-facing; sequence HPDSTL. Residues 74-94 form a helical membrane-spanning segment; that stretch reads VITINGTGILIEIVFLTIFFV. Over 95–102 the chain is Cytoplasmic; that stretch reads YCGRQKQR. The helical transmembrane segment at 103–123 threads the bilayer; sequence LIISAVIAAETAFIAILAVLV. The Extracellular segment spans residues 124 to 134; it reads LTLQHTTEKRT. The chain crosses the membrane as a helical span at residues 135–155; sequence MSVGIVCCVFNVMMYASPLSV. One can recognise a MtN3/slv 2 domain in the interval 136–221; that stretch reads SVGIVCCVFN…LYGAYYKSTK (86 aa). The Cytoplasmic segment spans residues 156–166; that stretch reads MKMVIKTKSVE. Residues 167-187 form a helical membrane-spanning segment; it reads FMPFWLSVAGFLNAGVWTIYA. Residues 188–193 are Extracellular-facing; it reads LMPFDP. Residues 194–214 traverse the membrane as a helical segment; that stretch reads FMAIPNGIGCLFGLAQLILYG. Topologically, residues 215-258 are cytoplasmic; sequence AYYKSTKRIMAERENQPGYVGLSSAIARTGSEKTANTNQEPNNV.

This sequence belongs to the SWEET sugar transporter family. Forms heterooligomers with SWEET8, SWEET11, SWEET13, SWEET16 and SWEET17.

The protein localises to the cell membrane. Functionally, mediates both low-affinity uptake and efflux of sugar across the plasma membrane. The chain is Bidirectional sugar transporter SWEET7 from Arabidopsis thaliana (Mouse-ear cress).